A 327-amino-acid chain; its full sequence is Acetyl-coenzyme A carboxylase carboxyl transferase subunit beta (327 aa).

A CoA carboxyltransferase N-terminal domain is found at 24–293 (LWIKCPDTGQ…LTVTTAVEAP (270 aa)). Residues 293-311 (PAEAAAKAEPEATTTEQPV) show a composition bias toward low complexity. Residues 293-327 (PAEAAAKAEPEATTTEQPVAPAPTEPPAQPAAPQA) are disordered. Over residues 312-327 (APAPTEPPAQPAAPQA) the composition is skewed to pro residues.

The protein belongs to the AccD/PCCB family. In terms of assembly, acetyl-CoA carboxylase is a heterohexamer composed of biotin carboxyl carrier protein (AccB), biotin carboxylase (AccC) and two subunits each of ACCase subunit alpha (AccA) and ACCase subunit beta (AccD).

It localises to the cytoplasm. The enzyme catalyses N(6)-carboxybiotinyl-L-lysyl-[protein] + acetyl-CoA = N(6)-biotinyl-L-lysyl-[protein] + malonyl-CoA. It participates in lipid metabolism; malonyl-CoA biosynthesis; malonyl-CoA from acetyl-CoA: step 1/1. In terms of biological role, component of the acetyl coenzyme A carboxylase (ACC) complex. Biotin carboxylase (BC) catalyzes the carboxylation of biotin on its carrier protein (BCCP) and then the CO(2) group is transferred by the transcarboxylase to acetyl-CoA to form malonyl-CoA. This chain is Acetyl-coenzyme A carboxylase carboxyl transferase subunit beta, found in Rhodopseudomonas palustris (strain TIE-1).